The chain runs to 274 residues: 2,3,4,5-tetrahydropyridine-2,6-dicarboxylate N-succinyltransferase (274 aa).

R107 and D144 together coordinate substrate.

It belongs to the transferase hexapeptide repeat family. Homotrimer.

The protein localises to the cytoplasm. It catalyses the reaction (S)-2,3,4,5-tetrahydrodipicolinate + succinyl-CoA + H2O = (S)-2-succinylamino-6-oxoheptanedioate + CoA. It functions in the pathway amino-acid biosynthesis; L-lysine biosynthesis via DAP pathway; LL-2,6-diaminopimelate from (S)-tetrahydrodipicolinate (succinylase route): step 1/3. This is 2,3,4,5-tetrahydropyridine-2,6-dicarboxylate N-succinyltransferase from Paracoccus denitrificans (strain Pd 1222).